The sequence spans 254 residues: Phosphoribosylaminoimidazole-succinocarboxamide synthase (254 aa).

The protein belongs to the SAICAR synthetase family.

It catalyses the reaction 5-amino-1-(5-phospho-D-ribosyl)imidazole-4-carboxylate + L-aspartate + ATP = (2S)-2-[5-amino-1-(5-phospho-beta-D-ribosyl)imidazole-4-carboxamido]succinate + ADP + phosphate + 2 H(+). The protein operates within purine metabolism; IMP biosynthesis via de novo pathway; 5-amino-1-(5-phospho-D-ribosyl)imidazole-4-carboxamide from 5-amino-1-(5-phospho-D-ribosyl)imidazole-4-carboxylate: step 1/2. This Bartonella henselae (strain ATCC 49882 / DSM 28221 / CCUG 30454 / Houston 1) (Rochalimaea henselae) protein is Phosphoribosylaminoimidazole-succinocarboxamide synthase.